Here is a 752-residue protein sequence, read N- to C-terminus: Peptidyl-prolyl cis-trans isomerase G (752 aa).

The PPIase cyclophilin-type domain maps to 11 to 176 (FFDIAINNQP…AEVRILSCGE (166 aa)). Residues 182 to 193 (KVKKEEKKRHKS) show a composition bias toward basic residues. Positions 182 to 752 (KVKKEEKKRH…SPGTDEDKSG (571 aa)) are disordered. The segment covering 194–214 (SSSSSSSDSDSSSDSQSSSDS) has biased composition (low complexity). Residues 226–251 (RKRKKKHRKNSRKHKKEKKKRKKSKK) are compositionally biased toward basic residues. Ser252, Ser254, Ser255, Ser257, and Ser288 each carry phosphoserine. The segment covering 290–308 (PKADDKERKNREREREREC) has biased composition (basic and acidic residues). Ser313 carries the post-translational modification Phosphoserine. Positions 327-345 (FGRKIKGRGPRRYRTPSRS) are enriched in basic residues. 2 stretches are compositionally biased toward basic and acidic residues: residues 346 to 366 (RSRD…EMQR) and 377 to 447 (RWIK…DKYN). Ser354 carries the phosphoserine modification. A Phosphothreonine modification is found at Thr356. Ser384 carries the phosphoserine modification. Lys390 participates in a covalent cross-link: Glycyl lysine isopeptide (Lys-Gly) (interchain with G-Cter in SUMO2). Phosphoserine is present on residues Ser395, Ser411, and Ser413. A compositionally biased stretch (basic residues) spans 448-461 (KNKVKKRGKSKSRS). 2 stretches are compositionally biased toward basic and acidic residues: residues 462–552 (KSKE…DLTK) and 577–598 (RSHD…QEYR). Over residues 599–625 (RRGRSRSRDRRTPGRSRSKDRRRRRRD) the composition is skewed to basic residues. The segment covering 626-682 (SRSSEREESQSRNKEKYRSQDSKSSHRKENSEGEKRMYSKSRDHSSSNNNREKKADI) has biased composition (basic and acidic residues). Phosphoserine occurs at positions 685 and 688. Residues 685-705 (SPVSKTKQSSQDNEVKSSTLK) show a composition bias toward polar residues. Lys691 is covalently cross-linked (Glycyl lysine isopeptide (Lys-Gly) (interchain with G-Cter in SUMO2)). A phosphoserine mark is found at Ser694, Ser742, and Ser743. The span at 706 to 752 (NQEDEKTRSPVEKENQKSKGQENDHVHDKNKKCDHESSPGTDEDKSG) shows a compositional bias: basic and acidic residues. Position 746 is a phosphothreonine (Thr746). The residue at position 751 (Ser751) is a Phosphoserine.

In terms of assembly, interacts with CLK1, PNN and with the phosphorylated C-terminal domain of RNA polymerase II.

The protein resides in the nucleus matrix. The protein localises to the nucleus speckle. The catalysed reaction is [protein]-peptidylproline (omega=180) = [protein]-peptidylproline (omega=0). With respect to regulation, inhibited by cyclosporin A (CsA). PPIase that catalyzes the cis-trans isomerization of proline imidic peptide bonds in oligopeptides and may therefore assist protein folding. May be implicated in the folding, transport, and assembly of proteins. May play an important role in the regulation of pre-mRNA splicing. This Rattus norvegicus (Rat) protein is Peptidyl-prolyl cis-trans isomerase G (Ppig).